Reading from the N-terminus, the 379-residue chain is Probable protein phosphatase 2C 46 (379 aa).

Residues 1 to 20 form the signal peptide; the sequence is MLSTLMKLLSACLWPSSSSG. The PPM-type phosphatase domain occupies 42–353; it reads LVGEFSMAVV…DDITVVIIFL (312 aa). Ser73 is subject to Phosphoserine. Mn(2+)-binding residues include Asp84, Gly85, Asp285, and Asp344.

The protein belongs to the PP2C family. In terms of assembly, interacts with SAUR19. Mg(2+) is required as a cofactor. Mn(2+) serves as cofactor.

The enzyme catalyses O-phospho-L-seryl-[protein] + H2O = L-seryl-[protein] + phosphate. It catalyses the reaction O-phospho-L-threonyl-[protein] + H2O = L-threonyl-[protein] + phosphate. May dephosphorylate and repress plasma membrane H(+)-ATPases (PM H(+)-ATPases, e.g. AHA1 and AHA2), thus influencing negatively plant growth and fitness. This is Probable protein phosphatase 2C 46 from Arabidopsis thaliana (Mouse-ear cress).